The sequence spans 246 residues: 1-(5-phosphoribosyl)-5-[(5-phosphoribosylamino)methylideneamino] imidazole-4-carboxamide isomerase (246 aa).

The active-site Proton acceptor is the D8. The active-site Proton donor is the D130.

Belongs to the HisA/HisF family.

The protein resides in the cytoplasm. The enzyme catalyses 1-(5-phospho-beta-D-ribosyl)-5-[(5-phospho-beta-D-ribosylamino)methylideneamino]imidazole-4-carboxamide = 5-[(5-phospho-1-deoxy-D-ribulos-1-ylimino)methylamino]-1-(5-phospho-beta-D-ribosyl)imidazole-4-carboxamide. It participates in amino-acid biosynthesis; L-histidine biosynthesis; L-histidine from 5-phospho-alpha-D-ribose 1-diphosphate: step 4/9. This is 1-(5-phosphoribosyl)-5-[(5-phosphoribosylamino)methylideneamino] imidazole-4-carboxamide isomerase from Hydrogenovibrio crunogenus (strain DSM 25203 / XCL-2) (Thiomicrospira crunogena).